The sequence spans 722 residues: D-galactosyl-beta-1-&gt;4-L-rhamnose phosphorylase (722 aa).

Asp-319 serves as the catalytic Proton donor.

Belongs to the glycoside hydrolase 112 family.

It catalyses the reaction beta-D-galactosyl-(1-&gt;4)-L-rhamnose + phosphate = alpha-D-galactose 1-phosphate + L-rhamnopyranose. Its function is as follows. Reversibly phosphorolyzes beta-D-galactosyl-(1-&gt;4)-L-rhamnose to form alpha-D-galactose 1-phosphate and L-rhamnose. Does not phosphorolyze galacto-N-biose or lacto-N-biose. In the reverse reaction, has the highest activity toward L-rhamnose, also has activity toward L-mannose, and low activity toward L-lyxose, D-glucose, 2-deoxy-D-glucose and D-galactose. The protein is D-galactosyl-beta-1-&gt;4-L-rhamnose phosphorylase of Lachnoclostridium phytofermentans (strain ATCC 700394 / DSM 18823 / ISDg) (Clostridium phytofermentans).